The chain runs to 393 residues: Elongation factor Tu (393 aa).

The 194-residue stretch at 10–203 (KPHVNIGTIG…AVDDYIPEPV (194 aa)) folds into the tr-type G domain. Positions 19–26 (GHVDHGKT) are G1. GTP is bound at residue 19–26 (GHVDHGKT). Residue threonine 26 participates in Mg(2+) binding. Residues 60–64 (GITIS) are G2. The tract at residues 81 to 84 (DCPG) is G3. GTP contacts are provided by residues 81–85 (DCPGH) and 136–139 (NKVD). The interval 136–139 (NKVD) is G4. Positions 173–175 (SAL) are G5.

It belongs to the TRAFAC class translation factor GTPase superfamily. Classic translation factor GTPase family. EF-Tu/EF-1A subfamily. In terms of assembly, monomer.

It localises to the cytoplasm. The catalysed reaction is GTP + H2O = GDP + phosphate + H(+). GTP hydrolase that promotes the GTP-dependent binding of aminoacyl-tRNA to the A-site of ribosomes during protein biosynthesis. The polypeptide is Elongation factor Tu (Chlorobium phaeobacteroides (strain BS1)).